The primary structure comprises 235 residues: Small ribosomal subunit protein uS3 (235 aa).

In terms of domain architecture, KH type-2 spans 39-107; it reads IRDFIKKECH…ELHLNIVEVR (69 aa). The interval 213–235 is disordered; sequence AARDRKAQELQDGPAPRGAGGRR.

Belongs to the universal ribosomal protein uS3 family. Part of the 30S ribosomal subunit. Forms a tight complex with proteins S10 and S14.

Its function is as follows. Binds the lower part of the 30S subunit head. Binds mRNA in the 70S ribosome, positioning it for translation. This chain is Small ribosomal subunit protein uS3, found in Roseobacter denitrificans (strain ATCC 33942 / OCh 114) (Erythrobacter sp. (strain OCh 114)).